Reading from the N-terminus, the 303-residue chain is Caspase-7 (303 aa).

Met-1 carries the post-translational modification N-acetylmethionine. A propeptide spanning residues 1-23 (MTDDQDCAAELEKVDSSSEDGVD) is cleaved from the precursor. The interval 1–26 (MTDDQDCAAELEKVDSSSEDGVDAKP) is disordered. Positions 10–26 (ELEKVDSSSEDGVDAKP) are enriched in basic and acidic residues. Ser-30 carries the phosphoserine modification. The interval 38–41 (KKKR) is exosite. The loop L1 stretch occupies residues 76 to 87 (KNFDKATGMDVR). Residue His-144 is part of the active site. Thr-173 bears the Phosphothreonine mark. The active site involves Cys-186. The interval 187-196 (RGTELDDGIQ) is loop L2. A propeptide spanning residues 199-206 (SGPINDID) is cleaved from the precursor. The loop L3 stretch occupies residues 226–238 (VPGYYSWRNPGKG). Position 239 is a phosphoserine (Ser-239). The loop L4 stretch occupies residues 274–288 (ESQSDDPRFNEKKQI).

This sequence belongs to the peptidase C14A family. In terms of assembly, heterotetramer that consists of two anti-parallel arranged heterodimers, each one formed by a 20 kDa (p20) and a 11 kDa (p11) subunit. Interacts with XIAP (via its second BIR domain); inhibiting CASP7 activity. Interacts with BIRC6/bruce. Interacts with ATXN3 (short isoform 1). Interacts with HSPA5. Cleavage by different proteases, such as granzyme B (GZMB), caspase-1 (CASP1), caspase-8 (CASP8) or caspase-9 (CASP9) generate the two active subunits. Its involvement in different programmed cell death processes is probably specified by the protease that activates CASP7. Cleaved and activated by initiator caspases (CASP8 and/or CASP9), leading to execution phase of apoptosis. Cleavage and maturation by GZMB regulates granzyme-mediated programmed cell death. Cleaved and activated by CASP1 in response to bacterial infection. Propeptide domains can also be cleaved efficiently by CASP3. Active heterodimers between the small subunit of caspase-7 and the large subunit of CASP3, and vice versa, also occur. Also cleaved at the N-terminus at alternative sites by CAPN1, leading to its activation. Post-translationally, phosphorylation at Ser-30 and Ser-239 by PAK2 inhibits its activity. Phosphorylation at Ser-30 prevents cleavage and activation by initiator caspase CASP9, while phosphorylation at Ser-239 prevents thiol protease activity by preventing substrate-binding. In terms of processing, ubiquitinated by BIRC6; this activity is inhibited by DIABLO/SMAC. In terms of tissue distribution, highly expressed in heart, lung, liver and kidney. Low levels in spleen, skeletal muscle and testis. No expression in the brain.

It is found in the cytoplasm. The protein resides in the cytosol. It localises to the nucleus. Its subcellular location is the secreted. The protein localises to the extracellular space. It carries out the reaction Strict requirement for an Asp residue at position P1 and has a preferred cleavage sequence of Asp-Glu-Val-Asp-|-.. During activation, the N-terminal disordered prodomain is removed by cleavage. Concomitantly, double cleavage gives rise to a large Caspase-7 subunit p20 and a small Caspase-7 subunit p11. The two large and two small subunits then assemble to form the active CASP7 complex. Can be cleaved and activated by different caspases, depending on the context. Cleaved and activated by initiator caspases (CASP8 and/or CASP9), leading to execution phase of apoptosis. Cleavage and maturation by GZMB regulates granzyme-mediated programmed cell death. Cleavage and maturation by CASP1 regulates pyroptosis. Inhibited by XIAP, which directly binds to the active site pocket and obstructs substrate entry. Phosphorylation at Ser-30 and Ser-239 by PAK2 inhibits its activity. Inhibited by BIRC6; following inhibition of BIRC6-caspase binding by DIABLO/SMAC, BIRC6 is subjected to caspase cleavage, leading to an increase in active caspases. Thiol protease involved in different programmed cell death processes, such as apoptosis, pyroptosis or granzyme-mediated programmed cell death, by proteolytically cleaving target proteins. Has a marked preference for Asp-Glu-Val-Asp (DEVD) consensus sequences, with some plasticity for alternate non-canonical sequences. Its involvement in the different programmed cell death processes is probably determined by upstream proteases that activate CASP7. Acts as an effector caspase involved in the execution phase of apoptosis: following cleavage and activation by initiator caspases (CASP8 and/or CASP9), mediates execution of apoptosis by catalyzing cleavage of proteins, such as CLSPN, PARP1, PTGES3 and YY1. Compared to CASP3, acts as a minor executioner caspase and cleaves a limited set of target proteins. Acts as a key regulator of the inflammatory response in response to bacterial infection by catalyzing cleavage and activation of the sphingomyelin phosphodiesterase SMPD1 in the extracellular milieu, thereby promoting membrane repair. Regulates pyroptosis in intestinal epithelial cells: cleaved and activated by CASP1 in response to S.typhimurium infection, promoting its secretion to the extracellular milieu, where it catalyzes activation of SMPD1, generating ceramides that repair membranes and counteract the action of gasdermin-D (GSDMD) pores. Regulates granzyme-mediated programmed cell death in hepatocytes: cleaved and activated by granzyme B (GZMB) in response to bacterial infection, promoting its secretion to the extracellular milieu, where it catalyzes activation of SMPD1, generating ceramides that repair membranes and counteract the action of perforin (PRF1) pores. Following cleavage by CASP1 in response to inflammasome activation, catalyzes processing and inactivation of PARP1, alleviating the transcription repressor activity of PARP1. Acts as an inhibitor of type I interferon production during virus-induced apoptosis by mediating cleavage of antiviral proteins CGAS, IRF3 and MAVS, thereby preventing cytokine overproduction. Cleaves and activates sterol regulatory element binding proteins (SREBPs). Cleaves phospholipid scramblase proteins XKR4, XKR8 and XKR9. Cleaves BIRC6 following inhibition of BIRC6-caspase binding by DIABLO/SMAC. This chain is Caspase-7, found in Mus musculus (Mouse).